Reading from the N-terminus, the 622-residue chain is Type 2 DNA topoisomerase 6 subunit B (622 aa).

ATP is bound by residues Asn-48, Asp-80, 101-102 (SR), 111-118 (GQQGIGIS), and Lys-435.

The protein belongs to the TOP6B family. Homodimer. Heterotetramer of two Top6A and two Top6B chains.

The enzyme catalyses ATP-dependent breakage, passage and rejoining of double-stranded DNA.. In terms of biological role, relaxes both positive and negative superturns and exhibits a strong decatenase activity. The chain is Type 2 DNA topoisomerase 6 subunit B from Methanococcoides burtonii (strain DSM 6242 / NBRC 107633 / OCM 468 / ACE-M).